The chain runs to 668 residues: Small ribosomal subunit protein mS81 (rPPR8) (668 aa).

The transit peptide at 1–36 (MRYQQWRLMLLRSYHRSHLPYLSPCSQVTSISSRSF) directs the protein to the mitochondrion. PPR repeat units follow at residues 286 to 320 (DEKT…GYEV), 321 to 355 (EIET…SSSS), 396 to 430 (TDSL…GYVP), 431 to 465 (SGDM…GNNL), 466 to 496 (DDKA…MVGN), 502 to 537 (ADYS…QLKP), and 543 to 577 (KSLV…GFPP).

The protein belongs to the PPR family. P subfamily. In terms of assembly, component of the mitochondrial ribosome small subunit.

Its subcellular location is the mitochondrion. This chain is Small ribosomal subunit protein mS81 (rPPR8), found in Arabidopsis thaliana (Mouse-ear cress).